The following is a 1340-amino-acid chain: Lysine-specific demethylase ELF6 (1340 aa).

Residues 16 to 57 form the JmjN domain; it reads APVFRPTDTEFADPIAYISKIEKEASAFGICKIIPPLPKPSK. The segment at 195–245 is disordered; the sequence is QRKRRGRGFYQRKTENNDPSGKNGEKSSPEVEKAPLASTSLSSQDSSKQKN. Residues 217–227 are compositionally biased toward basic and acidic residues; the sequence is NGEKSSPEVEK. Residues 262 to 428 form the JmjC domain; the sequence is NSSWNLQMIA…VAKEAAVRRA (167 aa). Fe cation contacts are provided by His-305, Glu-307, and His-396. A Nuclear localization signal 1 motif is present at residues 818–825; sequence GKKEEKII. The segment at 1092–1225 is disordered; that stretch reads GEPLESSDIL…SRQQEVPTTT (134 aa). The span at 1099–1115 shows a compositional bias: polar residues; that stretch reads DILSSSNGDEASSNGLQ. Low complexity predominate over residues 1124 to 1133; sequence ESEVSSSENT. A compositionally biased stretch (basic and acidic residues) spans 1188 to 1201; sequence SLKHTETSDEEKKP. Residues 1215–1225 are compositionally biased toward polar residues; that stretch reads GSRQQEVPTTT. 4 consecutive C2H2-type zinc fingers follow at residues 1228-1250, 1251-1275, 1281-1305, and 1311-1337; these read NRCY…THKR, NRCT…QRVH, FECS…LRLH, and YICK…KTMH. Cys-1230, Cys-1235, His-1248, Cys-1253, Cys-1258, His-1265, His-1271, His-1275, Cys-1283, Cys-1288, His-1301, His-1305, Cys-1313, Cys-1318, His-1331, and His-1337 together coordinate Zn(2+). The Nuclear localization signal 2 motif lies at 1248 to 1255; it reads HKRNRCTH. Residues 1260–1333 are DNA-binding; the sequence is KKFRAHKYLV…FVSDYSRHRR (74 aa).

The protein belongs to the JHDM3 histone demethylase family. As to quaternary structure, interacts with BZR2 (via N-terminus). As to expression, expressed at low levels in seedlings, cotyledons and leaves. Detected in inflorescences, stems, roots and siliques but not in shoot apical meristems or root tips. Accumulates in flowers and embryos.

It localises to the nucleus. The enzyme catalyses N(6),N(6),N(6)-trimethyl-L-lysyl(27)-[histone H3] + 2-oxoglutarate + O2 = N(6),N(6)-dimethyl-L-lysyl(27)-[histone H3] + formaldehyde + succinate + CO2. It catalyses the reaction N(6),N(6)-dimethyl-L-lysyl(27)-[histone H3] + 2-oxoglutarate + O2 = N(6)-methyl-L-lysyl(27)-[histone H3] + formaldehyde + succinate + CO2. Its function is as follows. Histone demethylase that demethylates 'Lys-27' (H3K27me) of histone H3, thus acting as a positive regulator of gene expression. Demethylates tri-methylated (H3K27me3) and di-methylated (H3K27me2) H3K27me. Inactive on H3K27me1, H3K4me3, H3K9me2 and H3K36me3. Acts as a repressor of the photoperiodic flowering pathway and of FT. May also be active on H3K4me. Binds around the transcription start site of the FT locus. Required for epigenetic reprogramming by resetting the expression of the floral repressor FLC locus, thus aluviating cold-mediated FLC epigenetically silencing occurring during vernalization and preventing inapropriate epigenetic states inheritence. Together with REF6, required for H3K27me3 resetting (especially in constitutive heterochromatin within the pericentromeric regions) and transgenerational inheritance of histone marks, thus acting in safeguarding genome and epigenome integrity during sexual reproduction. The protein is Lysine-specific demethylase ELF6 of Arabidopsis thaliana (Mouse-ear cress).